We begin with the raw amino-acid sequence, 191 residues long: TATA-box-binding protein (191 aa).

Repeat copies occupy residues 18 to 94 (LQNV…AKIV) and 108 to 185 (IQNI…YPVL).

It belongs to the TBP family. Belongs to the TFIID complex together with the TBP-associated factors (TAFs). Binds DNA as monomer.

The protein resides in the nucleus. General transcription factor that functions at the core of the DNA-binding multiprotein factor TFIID. Binding of TFIID to the TATA box is the initial transcriptional step of the pre-initiation complex (PIC), playing a role in the activation of eukaryotic genes transcribed by RNA polymerase II. In Acetabularia peniculus (Green alga), this protein is TATA-box-binding protein.